Reading from the N-terminus, the 493-residue chain is Glycerol kinase (493 aa).

Position 11 (T11) interacts with ADP. ATP contacts are provided by T11, T12, and S13. A sn-glycerol 3-phosphate-binding site is contributed by T11. An ADP-binding site is contributed by R15. Sn-glycerol 3-phosphate contacts are provided by R80, E81, Y132, and D241. Positions 80, 81, 132, 241, and 242 each coordinate glycerol. ADP-binding residues include T263 and G306. ATP-binding residues include T263, G306, Q310, and G408. Residue G408 coordinates ADP.

Belongs to the FGGY kinase family.

It carries out the reaction glycerol + ATP = sn-glycerol 3-phosphate + ADP + H(+). Its pathway is polyol metabolism; glycerol degradation via glycerol kinase pathway; sn-glycerol 3-phosphate from glycerol: step 1/1. Its activity is regulated as follows. Inhibited by fructose 1,6-bisphosphate (FBP). Its function is as follows. Key enzyme in the regulation of glycerol uptake and metabolism. Catalyzes the phosphorylation of glycerol to yield sn-glycerol 3-phosphate. This Cereibacter sphaeroides (strain KD131 / KCTC 12085) (Rhodobacter sphaeroides) protein is Glycerol kinase.